The chain runs to 399 residues: 3-sulfinopropanoyl-CoA desulfinase (399 aa).

FAD is bound by residues 121–124 (ICIS), S130, and 153–156 (YWIT). 244–245 (YN) is a substrate binding site. Residues R273, Q340, S344, 367 to 371 (GGTAQ), and Q388 each bind FAD.

It belongs to the acyl-CoA dehydrogenase family. Homotrimer or homotetramer. Requires FAD as cofactor.

It catalyses the reaction 3-sulfinopropanoyl-CoA + H2O = propanoyl-CoA + sulfite + H(+). In terms of biological role, catalyzes the conversion 3-sulfinopropanoyl-CoA (3SP-CoA) to propanoyl-CoA by abstraction of sulfite. Does not show dehydrogenase activity. The protein is 3-sulfinopropanoyl-CoA desulfinase of Variovorax paradoxus.